Consider the following 628-residue polypeptide: Alpha-L-arabinofuranosidase A (628 aa).

The N-terminal stretch at 1-25 (MVAFSALSGVSAVSLLLSLVQNAHG) is a signal peptide. N-linked (GlcNAc...) asparagine glycans are attached at residues asparagine 36, asparagine 51, asparagine 74, asparagine 152, asparagine 171, asparagine 260, asparagine 359, asparagine 440, asparagine 493, and asparagine 610.

The protein belongs to the glycosyl hydrolase 51 family.

It carries out the reaction Hydrolysis of terminal non-reducing alpha-L-arabinofuranoside residues in alpha-L-arabinosides.. The protein operates within glycan metabolism; L-arabinan degradation. Acts only on small linear 1,5-alpha-linked L-arabinofuranosyl oligosaccharides. This is Alpha-L-arabinofuranosidase A (abfA) from Aspergillus niger.